The chain runs to 243 residues: Leucinostatins biosynthesis cluster protein S (243 aa).

Its function is as follows. Part of the gene cluster that mediates the biosynthesis of the lipopeptide antibiotics leucinostatins that show extensive biological activities, including antimalarial, antiviral, antibacterial, antifungal, and antitumor activities, as well as phytotoxic. The function of lcsS within the leucinostatins biosynthesis has not been identified yet. The sequence is that of Leucinostatins biosynthesis cluster protein S from Purpureocillium lilacinum (Paecilomyces lilacinus).